The primary structure comprises 89 residues: Small ribosomal subunit protein uS15 (89 aa).

This sequence belongs to the universal ribosomal protein uS15 family. In terms of assembly, part of the 30S ribosomal subunit. Forms a bridge to the 50S subunit in the 70S ribosome, contacting the 23S rRNA.

In terms of biological role, one of the primary rRNA binding proteins, it binds directly to 16S rRNA where it helps nucleate assembly of the platform of the 30S subunit by binding and bridging several RNA helices of the 16S rRNA. Forms an intersubunit bridge (bridge B4) with the 23S rRNA of the 50S subunit in the ribosome. The chain is Small ribosomal subunit protein uS15 from Pseudomonas putida (Arthrobacter siderocapsulatus).